The chain runs to 115 residues: Androgen-binding protein homolog (115 aa).

The N-terminal stretch at 1–23 (MKGTLLLLALLVTGELGFQTTEA) is a signal peptide.

Belongs to the secretoglobin family.

Its subcellular location is the secreted. This Mesocricetus auratus (Golden hamster) protein is Androgen-binding protein homolog.